We begin with the raw amino-acid sequence, 101 residues long: Protein S100-A7-like 2 (101 aa).

EF-hand domains lie at 13–48 (IVAM…SGCE) and 50–85 (SDMD…ITID). Positions 63, 65, 67, 69, and 74 each coordinate Ca(2+). 2 residues coordinate Zn(2+): histidine 87 and histidine 91.

This sequence belongs to the S-100 family.

This is Protein S100-A7-like 2 (S100A7L2) from Homo sapiens (Human).